Consider the following 402-residue polypeptide: Acetate kinase (402 aa).

A Mg(2+)-binding site is contributed by Asn-7. Lys-14 is a binding site for ATP. Arg-95 is a binding site for substrate. Residue Asp-152 is the Proton donor/acceptor of the active site. ATP-binding positions include 212–216 (HLGNG), 286–288 (DMR), and 334–338 (GIGEN). A Mg(2+)-binding site is contributed by Glu-388.

This sequence belongs to the acetokinase family. In terms of assembly, homodimer. Mg(2+) is required as a cofactor. It depends on Mn(2+) as a cofactor.

The protein resides in the cytoplasm. It catalyses the reaction acetate + ATP = acetyl phosphate + ADP. It functions in the pathway metabolic intermediate biosynthesis; acetyl-CoA biosynthesis; acetyl-CoA from acetate: step 1/2. Its function is as follows. Catalyzes the formation of acetyl phosphate from acetate and ATP. Can also catalyze the reverse reaction. The chain is Acetate kinase from Nitratidesulfovibrio vulgaris (strain DP4) (Desulfovibrio vulgaris).